The following is a 1046-amino-acid chain: Nuclear pore complex protein NUP96 (1046 aa).

One can recognise a Peptidase S59 domain in the interval 51–187; the sequence is SPDYFLKPCI…GLWKFFVPHF (137 aa). Polar residues predominate over residues 283 to 295; that stretch reads RNVRPSQKIAQRN. The disordered stretch occupies residues 283-304; sequence RNVRPSQKIAQRNSHQDPPPVV. Phosphoserine is present on serine 523.

As to quaternary structure, part of the nuclear pore complex (NPC). The NPC has an eight-fold symmetrical structure comprising a central transport channel and two rings, the cytoplasmic and nuclear rings, to which eight filaments are attached. The cytoplasmic filaments have loose ends, while the nuclear filaments are joined in a distal ring, forming a nuclear basket. NPCs are highly dynamic in configuration and composition, and can be devided in 3 subcomplexes, the NUP62 subcomplex, the NUP107-160 subcomplex and the NUP93 subcomplex, containing approximately 30 different nucleoporin proteins. Expressed in roots, leaves, stems, flowers and siliques.

The protein resides in the nucleus membrane. It localises to the nucleus. It is found in the nuclear pore complex. Its function is as follows. Contributes to the transfer of mature mRNA from the nucleus to the cytosol. Required for both R gene-mediated and basal disease resistance. RNA export seems to play a critical role in stress responses and regulation of plant growth and development. This chain is Nuclear pore complex protein NUP96, found in Arabidopsis thaliana (Mouse-ear cress).